A 197-amino-acid chain; its full sequence is Probable GTP-binding protein EngB (197 aa).

Residues 22 to 197 (TGVEVAFAGR…LKEKLDIWYQ (176 aa)) form the EngB-type G domain. Residues 30-37 (GRSNAGKS), 57-61 (GRTQL), 75-78 (DLPG), 142-145 (TKAD), and 177-179 (FSS) contribute to the GTP site. Mg(2+) is bound by residues Ser37 and Thr59.

This sequence belongs to the TRAFAC class TrmE-Era-EngA-EngB-Septin-like GTPase superfamily. EngB GTPase family. Mg(2+) serves as cofactor.

Functionally, necessary for normal cell division and for the maintenance of normal septation. This is Probable GTP-binding protein EngB from Francisella philomiragia subsp. philomiragia (strain ATCC 25017 / CCUG 19701 / FSC 153 / O#319-036).